Consider the following 678-residue polypeptide: uncharacterized protein (678 aa).

This is an uncharacterized protein from Ostreid herpesvirus 1 (isolate France) (OsHV-1).